A 355-amino-acid chain; its full sequence is Histidinol-phosphate aminotransferase (355 aa).

N6-(pyridoxal phosphate)lysine is present on Lys222.

This sequence belongs to the class-II pyridoxal-phosphate-dependent aminotransferase family. Histidinol-phosphate aminotransferase subfamily. The cofactor is pyridoxal 5'-phosphate.

The enzyme catalyses L-histidinol phosphate + 2-oxoglutarate = 3-(imidazol-4-yl)-2-oxopropyl phosphate + L-glutamate. Its pathway is amino-acid biosynthesis; L-histidine biosynthesis; L-histidine from 5-phospho-alpha-D-ribose 1-diphosphate: step 7/9. The sequence is that of Histidinol-phosphate aminotransferase from Natronomonas pharaonis (strain ATCC 35678 / DSM 2160 / CIP 103997 / JCM 8858 / NBRC 14720 / NCIMB 2260 / Gabara) (Halobacterium pharaonis).